Here is a 387-residue protein sequence, read N- to C-terminus: Galactokinase (387 aa).

Position 33–36 (33–36 (EHTD)) interacts with substrate. ATP is bound by residues serine 67 and 124 to 130 (GAGLSSS). 2 residues coordinate Mg(2+): serine 130 and glutamate 162. Residue aspartate 174 is the Proton acceptor of the active site. Tyrosine 224 is a substrate binding site.

It belongs to the GHMP kinase family. GalK subfamily.

The protein resides in the cytoplasm. The enzyme catalyses alpha-D-galactose + ATP = alpha-D-galactose 1-phosphate + ADP + H(+). It participates in carbohydrate metabolism; galactose metabolism. In terms of biological role, catalyzes the transfer of the gamma-phosphate of ATP to D-galactose to form alpha-D-galactose-1-phosphate (Gal-1-P). The chain is Galactokinase from Lactiplantibacillus plantarum (strain ATCC BAA-793 / NCIMB 8826 / WCFS1) (Lactobacillus plantarum).